We begin with the raw amino-acid sequence, 713 residues long: Polyribonucleotide nucleotidyltransferase (713 aa).

2 residues coordinate Mg(2+): D495 and D501. One can recognise a KH domain in the interval 562–621 (PRLLTLKIPVDMIGLVIGPGGKTIKRIVEETGAKVDIEDDGTVVVSSIDGAKALAAKQII). Positions 631–700 (DKVYLGTVTR…QKGRINLTRR (70 aa)) constitute an S1 motif domain.

This sequence belongs to the polyribonucleotide nucleotidyltransferase family. Mg(2+) is required as a cofactor.

It is found in the cytoplasm. The catalysed reaction is RNA(n+1) + phosphate = RNA(n) + a ribonucleoside 5'-diphosphate. Its function is as follows. Involved in mRNA degradation. Catalyzes the phosphorolysis of single-stranded polyribonucleotides processively in the 3'- to 5'-direction. The protein is Polyribonucleotide nucleotidyltransferase of Gloeobacter violaceus (strain ATCC 29082 / PCC 7421).